The primary structure comprises 391 residues: Beta sliding clamp (391 aa).

This sequence belongs to the beta sliding clamp family. Forms a ring-shaped head-to-tail homodimer around DNA which binds and tethers DNA polymerases and other proteins to the DNA. The DNA replisome complex has a single clamp-loading complex (3 tau and 1 each of delta, delta', psi and chi subunits) which binds 3 Pol III cores (1 core on the leading strand and 2 on the lagging strand) each with a beta sliding clamp dimer. Additional proteins in the replisome are other copies of gamma, psi and chi, Ssb, DNA helicase and RNA primase.

It localises to the cytoplasm. Functionally, confers DNA tethering and processivity to DNA polymerases and other proteins. Acts as a clamp, forming a ring around DNA (a reaction catalyzed by the clamp-loading complex) which diffuses in an ATP-independent manner freely and bidirectionally along dsDNA. Initially characterized for its ability to contact the catalytic subunit of DNA polymerase III (Pol III), a complex, multichain enzyme responsible for most of the replicative synthesis in bacteria; Pol III exhibits 3'-5' exonuclease proofreading activity. The beta chain is required for initiation of replication as well as for processivity of DNA replication. This is Beta sliding clamp (dnaN) from Synechocystis sp. (strain ATCC 27184 / PCC 6803 / Kazusa).